Reading from the N-terminus, the 215-residue chain is NAD(P)H-hydrate epimerase (215 aa).

The region spanning 10-212 (SRELDDKTIN…DIGIYRGNAF (203 aa)) is the YjeF N-terminal domain. 59-63 (NNGGD) contributes to the (6S)-NADPHX binding site. K(+) is bound by residues N60 and D122. (6S)-NADPHX is bound by residues 126-132 (GSGLSRN) and D155. S158 is a binding site for K(+).

This sequence belongs to the NnrE/AIBP family. K(+) is required as a cofactor.

The enzyme catalyses (6R)-NADHX = (6S)-NADHX. It carries out the reaction (6R)-NADPHX = (6S)-NADPHX. Catalyzes the epimerization of the S- and R-forms of NAD(P)HX, a damaged form of NAD(P)H that is a result of enzymatic or heat-dependent hydration. This is a prerequisite for the S-specific NAD(P)H-hydrate dehydratase to allow the repair of both epimers of NAD(P)HX. This chain is NAD(P)H-hydrate epimerase, found in Lentilactobacillus buchneri (strain NRRL B-30929) (Lactobacillus buchneri).